The sequence spans 259 residues: UPF0246 protein Pfl01_0961 (259 aa).

The protein belongs to the UPF0246 family.

This Pseudomonas fluorescens (strain Pf0-1) protein is UPF0246 protein Pfl01_0961.